The primary structure comprises 447 residues: Elongation factor 1-alpha (447 aa).

The region spanning 5–230 (KFHINIVVIG…DQINDAKRPS (226 aa)) is the tr-type G domain. The G1 stretch occupies residues 14 to 21 (GHVDSGKS). 14–21 (GHVDSGKS) serves as a coordination point for GTP. An N6,N6-dimethyllysine modification is found at Lys-55. The tract at residues 70-74 (GITID) is G2. Lys-79 carries the post-translational modification N6,N6,N6-trimethyllysine. Residues 91–94 (DAPG) form a G3 region. GTP contacts are provided by residues 91–95 (DAPGH) and 153–156 (NKMD). A G4 region spans residues 153–156 (NKMD). Lys-187 is modified (N6,N6,N6-trimethyllysine). Residues 194-196 (SGF) are G5. Position 261 is an N6-methyllysine (Lys-261). A 5-glutamyl glycerylphosphorylethanolamine modification is found at Glu-289. Residue Lys-306 is modified to N6,N6,N6-trimethyllysine. Glu-362 is modified (5-glutamyl glycerylphosphorylethanolamine). An N6,N6,N6-trimethyllysine modification is found at Lys-396.

Belongs to the TRAFAC class translation factor GTPase superfamily. Classic translation factor GTPase family. EF-Tu/EF-1A subfamily. In terms of tissue distribution, was detected in all tissues examined but was most abundant in roots and salt-adapted cultured cells.

It is found in the cytoplasm. Its function is as follows. This protein promotes the GTP-dependent binding of aminoacyl-tRNA to the A-site of ribosomes during protein biosynthesis. The protein is Elongation factor 1-alpha of Nicotiana tabacum (Common tobacco).